The primary structure comprises 71 residues: Phosphatidylinositol N-acetylglucosaminyltransferase subunit Y (71 aa).

Over 1-3 (MFL) the chain is Cytoplasmic. Residues 4-26 (SLPTLTVLIPLVSLAGLFYSASV) traverse the membrane as a helical segment. The Lumenal portion of the chain corresponds to 27-44 (EENFPQGCTSTASLCFYS). Residues 45 to 65 (LLLPITIPVYVFFHLWTWMGI) form a helical membrane-spanning segment. At 66 to 71 (KLFRHN) the chain is on the cytoplasmic side.

Component of the glycosylphosphatidylinositol-N-acetylglucosaminyltransferase (GPI-GnT) complex composed at least by PIGA, PIGC, PIGH, PIGP, PIGQ, PIGY and DPM2. Interacts directly with PIGA; this interaction regulates glycosylphosphatidylinositol-N-acetylglucosaminyltransferase activity. Does not interact with Ras proteins.

The protein localises to the endoplasmic reticulum membrane. The protein operates within glycolipid biosynthesis; glycosylphosphatidylinositol-anchor biosynthesis. In terms of biological role, part of the glycosylphosphatidylinositol-N-acetylglucosaminyltransferase (GPI-GnT) complex that catalyzes the transfer of N-acetylglucosamine from UDP-N-acetylglucosamine to phosphatidylinositol and participates in the first step of GPI biosynthesis. May act by regulating the catalytic subunit PIGA. This Homo sapiens (Human) protein is Phosphatidylinositol N-acetylglucosaminyltransferase subunit Y.